Consider the following 154-residue polypeptide: 6,7-dimethyl-8-ribityllumazine synthase (154 aa).

5-amino-6-(D-ribitylamino)uracil contacts are provided by residues Phe-23, 57–59 (AFE), and 81–83 (AVI). (2S)-2-hydroxy-3-oxobutyl phosphate is bound at residue 86 to 87 (AT). Catalysis depends on His-89, which acts as the Proton donor. Phe-114 serves as a coordination point for 5-amino-6-(D-ribitylamino)uracil. A (2S)-2-hydroxy-3-oxobutyl phosphate-binding site is contributed by Arg-128.

The protein belongs to the DMRL synthase family.

The enzyme catalyses (2S)-2-hydroxy-3-oxobutyl phosphate + 5-amino-6-(D-ribitylamino)uracil = 6,7-dimethyl-8-(1-D-ribityl)lumazine + phosphate + 2 H2O + H(+). It functions in the pathway cofactor biosynthesis; riboflavin biosynthesis; riboflavin from 2-hydroxy-3-oxobutyl phosphate and 5-amino-6-(D-ribitylamino)uracil: step 1/2. Catalyzes the formation of 6,7-dimethyl-8-ribityllumazine by condensation of 5-amino-6-(D-ribitylamino)uracil with 3,4-dihydroxy-2-butanone 4-phosphate. This is the penultimate step in the biosynthesis of riboflavin. The protein is 6,7-dimethyl-8-ribityllumazine synthase of Syntrophus aciditrophicus (strain SB).